Reading from the N-terminus, the 473-residue chain is UDP-N-acetylmuramate--L-alanine ligase (473 aa).

An ATP-binding site is contributed by 122 to 128 (GTHGKTT).

It belongs to the MurCDEF family.

The protein localises to the cytoplasm. The catalysed reaction is UDP-N-acetyl-alpha-D-muramate + L-alanine + ATP = UDP-N-acetyl-alpha-D-muramoyl-L-alanine + ADP + phosphate + H(+). The protein operates within cell wall biogenesis; peptidoglycan biosynthesis. In terms of biological role, cell wall formation. In Teredinibacter turnerae (strain ATCC 39867 / T7901), this protein is UDP-N-acetylmuramate--L-alanine ligase.